Reading from the N-terminus, the 177-residue chain is ATP synthase subunit delta (177 aa).

Belongs to the ATPase delta chain family. F-type ATPases have 2 components, F(1) - the catalytic core - and F(0) - the membrane proton channel. F(1) has five subunits: alpha(3), beta(3), gamma(1), delta(1), epsilon(1). F(0) has three main subunits: a(1), b(2) and c(10-14). The alpha and beta chains form an alternating ring which encloses part of the gamma chain. F(1) is attached to F(0) by a central stalk formed by the gamma and epsilon chains, while a peripheral stalk is formed by the delta and b chains.

The protein resides in the cell inner membrane. In terms of biological role, f(1)F(0) ATP synthase produces ATP from ADP in the presence of a proton or sodium gradient. F-type ATPases consist of two structural domains, F(1) containing the extramembraneous catalytic core and F(0) containing the membrane proton channel, linked together by a central stalk and a peripheral stalk. During catalysis, ATP synthesis in the catalytic domain of F(1) is coupled via a rotary mechanism of the central stalk subunits to proton translocation. Its function is as follows. This protein is part of the stalk that links CF(0) to CF(1). It either transmits conformational changes from CF(0) to CF(1) or is implicated in proton conduction. In Haemophilus influenzae (strain PittEE), this protein is ATP synthase subunit delta.